We begin with the raw amino-acid sequence, 347 residues long: Violet-sensitive opsin (347 aa).

At 1–31 (MLEEEDFYLFKNVSNVSPFDGPQYHIAPKWA) the chain is on the extracellular side. N-linked (GlcNAc...) asparagine glycosylation is present at asparagine 12. A helical membrane pass occupies residues 32–56 (FTLQAIFMGMVFLIGTPLNFIVLLV). The Cytoplasmic portion of the chain corresponds to 57-68 (TIKYKKLRQPLN). Residues 69–94 (YILVNITVGGFLMCIFSIFPVFVSSS) traverse the membrane as a helical segment. Residues 95 to 108 (QGYFFFGRIACSID) lie on the Extracellular side of the membrane. A disulfide bridge links cysteine 105 with cysteine 182. The helical transmembrane segment at 109 to 128 (AFVGTLTGLVTGWSLAFLAF) threads the bilayer. Over 129–147 (ERYIVICKPMGNFNFSSSH) the chain is Cytoplasmic. A helical membrane pass occupies residues 148-171 (ALAVVICTWIIGIVVSVPPFLGWS). Residues 172-197 (RYMPEGLQCSCGPDWYTVGTKYRSEY) are Extracellular-facing. The chain crosses the membrane as a helical span at residues 198–225 (YTWFIFIFCFVIPLSLICFSYGRLLGAL). The Cytoplasmic portion of the chain corresponds to 226–247 (RAVAAQQQESASTQKAEREVSR). The helical transmembrane segment at 248-271 (MVIFMVGSFCLCYVPYAAMAMYMV) threads the bilayer. Topologically, residues 272–279 (TNRNHGLD) are extracellular. The helical transmembrane segment at 280–304 (LRLVTIPAFFSKSSCVYNPIIYSFM) threads the bilayer. Lysine 291 bears the N6-(retinylidene)lysine mark. Residues 305–347 (NKQFRGCIMETVCGRPMSDDSSVSSTSQRTEVSTVSSSQVSPA) are Cytoplasmic-facing. The tract at residues 323-347 (DDSSVSSTSQRTEVSTVSSSQVSPA) is disordered.

Belongs to the G-protein coupled receptor 1 family. Opsin subfamily. In terms of processing, phosphorylated on some or all of the serine and threonine residues present in the C-terminal region. The color pigments are found in the cone photoreceptor cells.

The protein resides in the membrane. Its function is as follows. Visual pigments are the light-absorbing molecules that mediate vision. They consist of an apoprotein, opsin, covalently linked to cis-retinal. This is Violet-sensitive opsin from Xenopus laevis (African clawed frog).